Reading from the N-terminus, the 622-residue chain is Calmodulin-binding protein 60 C (622 aa).

Residues 1-19 are compositionally biased toward basic and acidic residues; that stretch reads MQTRYMERTNSMREKRKLE. Residues 1–35 are disordered; it reads MQTRYMERTNSMREKRKLEEDDNQQQQQQPERKRP. The calmodulin-binding stretch occupies residues 10 to 89; the sequence is NSMREKRKLE…RLSERSSPKR (80 aa). The tract at residues 159–282 is DNA-binding; sequence EDDDGWSGEE…AFHKKLNKAG (124 aa).

Belongs to the plant ACBP60 protein family. As to quaternary structure, interacts with calmodulin (CaM). Expressed in stems, flowers and root.

The protein localises to the nucleus. In terms of biological role, transcription activator that binds DNA in a sequence-specific manner, likely 5'-GAAATTTTGG-3', to promote the expression of target genes. The protein is Calmodulin-binding protein 60 C of Arabidopsis thaliana (Mouse-ear cress).